The primary structure comprises 238 residues: Arginine ABC transporter permease protein ArtQ (238 aa).

The Periplasmic portion of the chain corresponds to 1–14; sequence MNEFFPLASAAGMT. The region spanning 11–223 is the ABC transmembrane type-1 domain; it reads AGMTVGLAVC…VITLLSQYIL (213 aa). The chain crosses the membrane as a helical span at residues 15–35; that stretch reads VGLAVCALIVGLALAMFFAVW. Topologically, residues 36–48 are cytoplasmic; it reads ESAKWRPVAWAGS. A helical membrane pass occupies residues 49–69; that stretch reads ALVTILRGLPEILVVLFIYFG. The Periplasmic portion of the chain corresponds to 70–98; that stretch reads SSQLLLTLSDGFTINLGFVQIPVQMDIEN. A helical membrane pass occupies residues 99–119; the sequence is FDVSPFLCGVIALSLLYAAYA. At 120–168 the chain is on the cytoplasmic side; sequence SQTLRGALKAVPVGQWESGQALGLSKSAIFFRLVMPQMWRHALPGLGNQ. Residues 169–189 traverse the membrane as a helical segment; sequence WLVLLKDTALVSLISVNDLML. Topologically, residues 190–201 are periplasmic; it reads QTKSIATRTQEP. A helical transmembrane segment spans residues 202-222; sequence FTWYIVAAAIYLVITLLSQYI. The Cytoplasmic portion of the chain corresponds to 223-238; the sequence is LKRIDLRATRFERRPS.

This sequence belongs to the binding-protein-dependent transport system permease family. HisMQ subfamily. The complex is composed of two ATP-binding proteins (ArtP), two transmembrane proteins (ArtM and ArtQ) and two solute-binding proteins (ArtJ and ArtI).

The protein resides in the cell inner membrane. Functionally, part of the ABC transporter complex ArtPIQMJ involved in arginine transport. Probably responsible for the translocation of the substrate across the membrane. The sequence is that of Arginine ABC transporter permease protein ArtQ (artQ) from Escherichia coli O6:H1 (strain CFT073 / ATCC 700928 / UPEC).